A 188-amino-acid polypeptide reads, in one-letter code: dCTP deaminase (188 aa).

DCTP contacts are provided by residues 111–116, 135–137, glutamine 156, tyrosine 170, and glutamine 180; these read KSTYAR and TLE. Catalysis depends on glutamate 137, which acts as the Proton donor/acceptor.

It belongs to the dCTP deaminase family. As to quaternary structure, homotrimer.

The enzyme catalyses dCTP + H2O + H(+) = dUTP + NH4(+). It functions in the pathway pyrimidine metabolism; dUMP biosynthesis; dUMP from dCTP (dUTP route): step 1/2. In terms of biological role, catalyzes the deamination of dCTP to dUTP. This is dCTP deaminase from Pseudomonas putida (strain GB-1).